Consider the following 1474-residue polypeptide: Adhesion G protein-coupled receptor L1 (1474 aa).

Residues 1–24 form the signal peptide; it reads MARLAAVLWNLCVTAVLVTSATQG. Residues 25–858 are Extracellular-facing; sequence LSRAGLPFGL…EIYQGRINEL (834 aa). Positions 40 to 129 constitute an SUEL-type lectin domain; that stretch reads ACEGYPIELR…KYLEVQYDCV (90 aa). 5 disulfides stabilise this stretch: C41-C71, C50-C128, C83-C115, C96-C102, and C140-C322. E42 serves as a coordination point for alpha-L-rhamnose. The N-linked (GlcNAc...) asparagine glycan is linked to N98. Residue 117-120 coordinates alpha-L-rhamnose; sequence GTYK. Residues 139–398 enclose the Olfactomedin-like domain; sequence VCPGTLQKVL…VVRYSLEFGP (260 aa). The interval 400 to 434 is disordered; it reads DPSAGPATSPPLSTTTTARPTPLTSTASPAATTPL. A compositionally biased stretch (low complexity) spans 405-434; that stretch reads PATSPPLSTTTTARPTPLTSTASPAATTPL. 2 cysteine pairs are disulfide-bonded: C480-C515 and C503-C532. 6 N-linked (GlcNAc...) asparagine glycosylation sites follow: N531, N640, N742, N801, N806, and N827. One can recognise a GAIN-B domain in the interval 669 to 851; sequence PARFLAAKEN…AVLMAHREIY (183 aa). 2 disulfides stabilise this stretch: C802-C833 and C821-C835. The tract at residues 802-851 is GPS; it reads CSFWNYSERSMLGYWSTQGCRLVESNKTHTTCACSHLTNFAVLMAHREIY. The chain crosses the membrane as a helical span at residues 859-879; that stretch reads LLSVITWVGIVISLVCLAICI. At 880-893 the chain is on the cytoplasmic side; it reads STFCFLRGLQTDRN. The chain crosses the membrane as a helical span at residues 894 to 914; the sequence is TIHKNLCINLFLAELLFLVGI. Residues 915-920 lie on the Extracellular side of the membrane; the sequence is DKTQYE. Residues 921-941 form a helical membrane-spanning segment; sequence IACPIFAGLLHYFFLAAFSWL. Residues 942–964 lie on the Cytoplasmic side of the membrane; the sequence is CLEGVHLYLLLVEVFESEYSRTK. Residues 965–985 form a helical membrane-spanning segment; the sequence is YYYLGGYCFPALVVGIAAAID. Topologically, residues 986 to 1002 are extracellular; that stretch reads YRSYGTEKACWLRVDNY. The helical transmembrane segment at 1003–1023 threads the bilayer; the sequence is FIWSFIGPVSFVIVVNLVFLM. Residues 1024–1050 are Cytoplasmic-facing; it reads VTLHKMIRSSSVLKPDSSRLDNIKSWA. The chain crosses the membrane as a helical span at residues 1051-1071; the sequence is LGAIALLFLLGLTWAFGLLFI. Residues 1072 to 1075 are Extracellular-facing; that stretch reads NKES. The chain crosses the membrane as a helical span at residues 1076-1096; the sequence is VVMAYLFTTFNAFQGVFIFVF. Over 1097 to 1474 the chain is Cytoplasmic; that stretch reads HCALQKKVHK…DGQMQLVTSL (378 aa). R1194 is subject to Omega-N-methylarginine. Position 1220 is a phosphoserine (S1220). 4 disordered regions span residues 1248 to 1273, 1294 to 1328, 1360 to 1429, and 1451 to 1474; these read FNNS…RGRN, RGSS…PGGA, ESES…SRPP, and YLAA…VTSL. 2 stretches are compositionally biased toward pro residues: residues 1302–1314 and 1408–1420; these read GPPP…PPVP and ALPP…PGPP. Phosphoserine is present on S1473.

Belongs to the G-protein coupled receptor 2 family. Adhesion G-protein coupled receptor (ADGR) subfamily. In terms of assembly, forms a heterodimer, consisting of a large extracellular region (p120) non-covalently linked to a seven-transmembrane moiety (p85). Interacts with syntaxin and with proteins of the SHANK family via the PDZ domain. Interacts (via extracellular domain) with FLRT1, FLRT2 and FLRT3 (via extracellular domain). Autoproteolytically cleaved into 2 subunits, an extracellular subunit and a seven-transmembrane subunit. This proteolytic processing takes place early in the biosynthetic pathway, either in the endoplasmic reticulum or in the early compartment of the Golgi apparatus.

The protein localises to the cell membrane. It is found in the cell projection. Its subcellular location is the axon. It localises to the growth cone. The protein resides in the synapse. The protein localises to the presynaptic cell membrane. It is found in the synaptosome. Calcium-independent receptor of high affinity for alpha-latrotoxin, an excitatory neurotoxin present in black widow spider venom which triggers massive exocytosis from neurons and neuroendocrine cells. Receptor for TENM2 that mediates heterophilic synaptic cell-cell contact and postsynaptic specialization. Receptor probably implicated in the regulation of exocytosis. This is Adhesion G protein-coupled receptor L1 from Homo sapiens (Human).